A 324-amino-acid chain; its full sequence is PGR5-like protein 1A, chloroplastic (324 aa).

Residues 1–60 (MGSKMLFSLTSPRLFSAVSRKPSSSFSPSPPSPSSRTQWTQLSPGKSISLRRRVFLLPAK) constitute a chloroplast transit peptide. The tract at residues 16–42 (SAVSRKPSSSFSPSPPSPSSRTQWTQL) is disordered. Residues 61–198 (ATTEQSGPVG…KVYSDLAVDY (138 aa)) lie on the Stromal side of the membrane. A disulfide bridge connects residues cysteine 82 and cysteine 183. Residues 199–219 (FKMLLLNVPATVVALGLFFFL) traverse the membrane as a helical segment. The Lumenal, thylakoid segment spans residues 220 to 236 (DDITGFEITYIMELPEP). Residues 237–257 (YSFIFTWFAAVPVIVYLALSI) form a helical membrane-spanning segment. The Stromal segment spans residues 258–324 (TKLIIKDFLI…LITLPEGSQA (67 aa)).

It belongs to the PGR5 family. In terms of assembly, homodimer and heterodimer with PGR5. Interacts with PGR5, FD2, petC, psaD1, LFNR1 and LFNR2. Also interacts with a Fe-containing cofactor (FCC). Disulfide bonds; Cys-300 and Cys-303 are probably involved in the formation of disulfide bridges with 'Cys-11' and 'Cys-105' of PGR5 while Cys-272 and Cys-275 are probably involved in the binding of a Fe-containing cofactor (FCC).

Its subcellular location is the plastid. It is found in the chloroplast thylakoid membrane. Inhibited by antimycin A. In terms of biological role, ferredoxin-plastoquinone reductase involved in cyclic electron flow (CEF) around photosystem I. The homodimer is probably not involved in CEF. This Arabidopsis thaliana (Mouse-ear cress) protein is PGR5-like protein 1A, chloroplastic (PGRL1A).